We begin with the raw amino-acid sequence, 366 residues long: MERGSRDHHRDHRDHREHRELREPPTLAFHMKSWKTINKPLKAFTKLLKENTTVTFTPQPSIIIQSAKNHLVQKLTIQAECLFLSDTEHFLTKTINNHIPLFESFMNIISNPEVTKLYIQHDSDLYTRVLVTASDTCTQASVPCVHGQEVVRDSGKSPLRIDLDHSTVSEVLKWLSPVTKTKRSGKSDAFMAHIIVQVNPPTIKFVTEMNELEFSNSNKVIFYDVNNMRFNLSAKNLQQALSMCAVIKTSCSLRTVAAKDCKLILTSKSTLLTVEAFLTQEQLKEESRFERMGKQDDGKGDRNHKNEDGSALASKQETQYKITNYMVPTKNGTAGSSLFNEKEDSESDDSMHFEYSSNPKRQRCVV.

Over residues 1-16 (MERGSRDHHRDHRDHR) the composition is skewed to basic residues. Disordered regions lie at residues 1 to 25 (MERG…REPP) and 286 to 366 (ESRF…RCVV). Residues 286 to 308 (ESRFERMGKQDDGKGDRNHKNED) show a composition bias toward basic and acidic residues. 2 stretches are compositionally biased toward polar residues: residues 313-322 (ASKQETQYKI) and 330-339 (KNGTAGSSLF).

This sequence belongs to the herpesviridae polymerase accessory protein family.

In terms of biological role, accessory subunit of the DNA polymerase that acts to increase the processivity of polymerization. This Homo sapiens (Human) protein is DNA polymerase processivity factor (U27).